The chain runs to 322 residues: Polyisoprenyl-teichoic acid--peptidoglycan teichoic acid transferase TagT (322 aa).

The Cytoplasmic portion of the chain corresponds to 1-19 (MEERSQRRKKKRKLKKWVK). The helical; Signal-anchor for type II membrane protein transmembrane segment at 20 to 40 (VVAGLMAFLVIAAGSVGAYAF) threads the bilayer. Residues 41 to 322 (VKLNNASKEA…KKELQNDLGV (282 aa)) are Extracellular-facing.

This sequence belongs to the LytR/CpsA/Psr (LCP) family. As to quaternary structure, interacts with MreB.

It localises to the cell membrane. It functions in the pathway cell wall biogenesis. Its function is as follows. May catalyze the final step in cell wall teichoic acid biosynthesis, the transfer of the anionic cell wall polymers (APs) from their lipid-linked precursor to the cell wall peptidoglycan (PG). This is Polyisoprenyl-teichoic acid--peptidoglycan teichoic acid transferase TagT from Bacillus subtilis (strain 168).